The primary structure comprises 280 residues: Gastrula zinc finger protein XlCGF46.1 (280 aa).

10 consecutive C2H2-type zinc fingers follow at residues 6 to 28 (FACK…KLMH), 34 to 56 (FECT…QLIH), 62 to 84 (FVCP…LLCH), 90 to 112 (FTCK…KLTH), 118 to 140 (FICS…QLIH), 146 to 168 (YVCT…LRTH), 174 to 196 (FKCE…KVTH), 202 to 224 (FTCE…QLTH), 230 to 252 (FKCE…QRFH), and 258 to 280 (YKCN…ELSH).

Belongs to the krueppel C2H2-type zinc-finger protein family.

The protein localises to the nucleus. May be involved in transcriptional regulation. The chain is Gastrula zinc finger protein XlCGF46.1 from Xenopus laevis (African clawed frog).